Here is a 219-residue protein sequence, read N- to C-terminus: Transmembrane protein 247 (219 aa).

2 stretches are compositionally biased toward basic and acidic residues: residues 1 to 10 and 29 to 45; these read MAAEDREMME and SKSEGKPRAYLEAESQK. The disordered stretch occupies residues 1–101; it reads MAAEDREMME…LPPTPGTERN (101 aa). Residues 121–156 adopt a coiled-coil conformation; the sequence is LHEKNQRQRQHEVVMEQLQRERQHEVVMEQLQQEAA. The next 2 membrane-spanning stretches (helical) occupy residues 167–187 and 194–214; these read FLLPQNQFAMFLYCFIFIHII and VFFLFAKHYLFCIAAILLCLI.

The protein resides in the membrane. The polypeptide is Transmembrane protein 247 (TMEM247) (Homo sapiens (Human)).